We begin with the raw amino-acid sequence, 360 residues long: Photosystem II protein D1 2 (360 aa).

A run of 3 helical transmembrane segments spans residues 29–46 (YIGWFGVLMIPTLLAATT), 118–133 (HFLTGVFCYLGREWEL), and 142–156 (WICLAFSAPVAAATA). His118 is a binding site for chlorophyll a. Residue Tyr126 coordinates pheophytin a. 2 residues coordinate [CaMn4O5] cluster: Asp170 and Glu189. Residues 197–218 (FHMLGVAGVFGGSLFSAMHGSL) traverse the membrane as a helical segment. Residue His198 participates in chlorophyll a binding. A quinone contacts are provided by residues His215 and 264–265 (SF). Residue His215 coordinates Fe cation. His272 provides a ligand contact to Fe cation. The chain crosses the membrane as a helical span at residues 274 to 288 (FLAAWPVIGIWFTAL). [CaMn4O5] cluster is bound by residues His332, Glu333, Asp342, and Ala344. Positions 345–360 (AGEVAPVALTAPAING) are excised as a propeptide.

Belongs to the reaction center PufL/M/PsbA/D family. As to quaternary structure, PSII is composed of 1 copy each of membrane proteins PsbA, PsbB, PsbC, PsbD, PsbE, PsbF, PsbH, PsbI, PsbJ, PsbK, PsbL, PsbM, PsbT, PsbX, PsbY, PsbZ, Psb30/Ycf12, peripheral proteins PsbO, CyanoQ (PsbQ), PsbU, PsbV and a large number of cofactors. It forms dimeric complexes. The D1/D2 heterodimer binds P680, chlorophylls that are the primary electron donor of PSII, and subsequent electron acceptors. It shares a non-heme iron and each subunit binds pheophytin, quinone, additional chlorophylls, carotenoids and lipids. D1 provides most of the ligands for the Mn4-Ca-O5 cluster of the oxygen-evolving complex (OEC). There is also a Cl(-1) ion associated with D1 and D2, which is required for oxygen evolution. The PSII complex binds additional chlorophylls, carotenoids and specific lipids. serves as cofactor. Tyr-161 forms a radical intermediate that is referred to as redox-active TyrZ, YZ or Y-Z. In terms of processing, C-terminally processed by CtpA; processing is essential to allow assembly of the oxygen-evolving complex and thus photosynthetic growth.

The protein resides in the cellular thylakoid membrane. The enzyme catalyses 2 a plastoquinone + 4 hnu + 2 H2O = 2 a plastoquinol + O2. Functionally, photosystem II (PSII) is a light-driven water:plastoquinone oxidoreductase that uses light energy to abstract electrons from H(2)O, generating O(2) and a proton gradient subsequently used for ATP formation. It consists of a core antenna complex that captures photons, and an electron transfer chain that converts photonic excitation into a charge separation. The D1/D2 (PsbA/PsbD) reaction center heterodimer binds P680, the primary electron donor of PSII as well as several subsequent electron acceptors. This chain is Photosystem II protein D1 2, found in Trichormus variabilis (strain ATCC 29413 / PCC 7937) (Anabaena variabilis).